A 52-amino-acid polypeptide reads, in one-letter code: DNA-directed RNA polymerase subunit Rpo12 (52 aa).

C13, C30, and C33 together coordinate Zn(2+).

This sequence belongs to the archaeal Rpo12/eukaryotic RPC10 RNA polymerase subunit family. Part of the RNA polymerase complex. Zn(2+) is required as a cofactor.

It localises to the cytoplasm. The catalysed reaction is RNA(n) + a ribonucleoside 5'-triphosphate = RNA(n+1) + diphosphate. In terms of biological role, DNA-dependent RNA polymerase (RNAP) catalyzes the transcription of DNA into RNA using the four ribonucleoside triphosphates as substrates. The protein is DNA-directed RNA polymerase subunit Rpo12 of Pyrobaculum neutrophilum (strain DSM 2338 / JCM 9278 / NBRC 100436 / V24Sta) (Thermoproteus neutrophilus).